A 208-amino-acid chain; its full sequence is uncharacterized protein (208 aa).

This is an uncharacterized protein from Acidianus sp. F28 (AFV-2).